A 1261-amino-acid chain; its full sequence is Pentatricopeptide repeat-containing protein 5, mitochondrial (1261 aa).

PPR repeat units lie at residues 365–404, 405–442, 443–479, 480–514, 550–584, 806–849, 852–886, 887–924, 925–959, 960–995, 996–1031, 1032–1068, 1109–1143, 1144–1179, and 1180–1214; these read HPDLLPALIRALGRAKRLNSCFQLLERYNLSDPTSDTSMT, NVRSWEGLMEAYFDTDHHVEASALMKSFFRKADSNQVI, PSSILDCFLRRLAQLGHYKESAEWLGMAIEKISTYKA, SPSTLSSILEAACLNNNDKFAIAFVRKYTLSRFSD, TNFTFSNVYKAFIENGKIDVALRLLRKHIDPKVSL, HPEV…EKAN, MALILDAMILSSSFARQFKSSNLFCDNMKMLGYIP, RASTFAHLINNSTRRGDTDDATTALNIFEETKRHNVKP, SVFLYNAVLSKLGRARRTTECWKLFQEMKESGLLP, TSVTYGTVINAACRIGDESLAEKLFAEMENQPNYQP, RVAPYNTMIQFEVQTMFNREKALFYYNRLCATDIEP, SSHTYKLLMDAYGTLKPVNVGSVKAVLELMERTDVPI, DANLFQSQIESLIANDRIVEGIQIVSDMKRYNVSL, NAYIVNALIKGFTKVGMISKARYYFDLLECEGMSGK, and EPSTYENMVRAYLSVNDGRKAMEIVEQLKRKRYPL. The tract at residues 1225–1261 is disordered; it reads NSHMGQKPKRRSLNTSHSSLASLGNASTQHSINSSIN. Polar residues predominate over residues 1237–1261; sequence LNTSHSSLASLGNASTQHSINSSIN.

It localises to the mitochondrion. Mitochondrial RNA-binding protein that acts as a general negative regulator of mitochondrial translation. This Schizosaccharomyces pombe (strain 972 / ATCC 24843) (Fission yeast) protein is Pentatricopeptide repeat-containing protein 5, mitochondrial (ppr5).